The chain runs to 227 residues: Pro-thyrotropin-releasing hormone-A (227 aa).

An N-terminal signal peptide occupies residues 1-15; the sequence is MVSVWWLLLLGTTVS. The residue at position 75 (glutamine 75) is a Pyrrolidone carboxylic acid. Position 77 is a proline amide (proline 77). Pyrrolidone carboxylic acid is present on glutamine 89. Position 91 is a proline amide (proline 91). Glutamine 107 bears the Pyrrolidone carboxylic acid mark. Disordered stretches follow at residues 107–128 and 151–204; these read QHPGRRFVDDVEKRQHPGKREE and RRQH…PCEG. Position 109 is a proline amide (proline 109). Over residues 112-128 the composition is skewed to basic and acidic residues; the sequence is RFVDDVEKRQHPGKREE. Glutamine 121 carries the post-translational modification Pyrrolidone carboxylic acid. Residue proline 123 is modified to Proline amide. Glutamine 153 carries the post-translational modification Pyrrolidone carboxylic acid. Proline 155 bears the Proline amide mark. Glutamine 168 is subject to Pyrrolidone carboxylic acid. Proline 170 is modified (proline amide). Basic and acidic residues predominate over residues 184 to 201; sequence ENSKEVGKRQHPGKRYDP. Residue glutamine 193 is modified to Pyrrolidone carboxylic acid. Proline 195 carries the post-translational modification Proline amide.

This sequence belongs to the TRH family.

It is found in the secreted. The protein is Pro-thyrotropin-releasing hormone-A (trh-a) of Xenopus laevis (African clawed frog).